The following is a 497-amino-acid chain: Probable cytosol aminopeptidase (497 aa).

Mn(2+) contacts are provided by lysine 267 and aspartate 272. Residue lysine 279 is part of the active site. Mn(2+) contacts are provided by aspartate 290, aspartate 349, and glutamate 351. Arginine 353 is a catalytic residue.

It belongs to the peptidase M17 family. Requires Mn(2+) as cofactor.

The protein resides in the cytoplasm. It carries out the reaction Release of an N-terminal amino acid, Xaa-|-Yaa-, in which Xaa is preferably Leu, but may be other amino acids including Pro although not Arg or Lys, and Yaa may be Pro. Amino acid amides and methyl esters are also readily hydrolyzed, but rates on arylamides are exceedingly low.. The catalysed reaction is Release of an N-terminal amino acid, preferentially leucine, but not glutamic or aspartic acids.. Functionally, presumably involved in the processing and regular turnover of intracellular proteins. Catalyzes the removal of unsubstituted N-terminal amino acids from various peptides. This chain is Probable cytosol aminopeptidase, found in Pseudomonas putida (strain W619).